Here is a 78-residue protein sequence, read N- to C-terminus: Acyl carrier protein (78 aa).

One can recognise a Carrier domain in the interval 2–77 (SDIAERVKKI…DAVKFIEKAQ (76 aa)). The residue at position 37 (Ser37) is an O-(pantetheine 4'-phosphoryl)serine.

Belongs to the acyl carrier protein (ACP) family. In terms of processing, 4'-phosphopantetheine is transferred from CoA to a specific serine of apo-ACP by AcpS. This modification is essential for activity because fatty acids are bound in thioester linkage to the sulfhydryl of the prosthetic group.

The protein resides in the cytoplasm. It participates in lipid metabolism; fatty acid biosynthesis. In terms of biological role, carrier of the growing fatty acid chain in fatty acid biosynthesis. In Rhizobium etli (strain CIAT 652), this protein is Acyl carrier protein.